The sequence spans 106 residues: uncharacterized protein (106 aa).

The next 2 helical transmembrane spans lie at 46-68 (LLQE…ILAF) and 73-92 (AVFI…LIAA).

The protein resides in the cell membrane. This is an uncharacterized protein from Bacillus subtilis (strain 168).